The sequence spans 136 residues: Large ribosomal subunit protein uL16 (136 aa).

This sequence belongs to the universal ribosomal protein uL16 family. In terms of assembly, part of the 50S ribosomal subunit.

Binds 23S rRNA and is also seen to make contacts with the A and possibly P site tRNAs. This chain is Large ribosomal subunit protein uL16, found in Vibrio atlanticus (strain LGP32) (Vibrio splendidus (strain Mel32)).